The primary structure comprises 209 residues: Small ribosomal subunit protein uS5 (209 aa).

Over residues 1-11 (MTQPNTQTTPN) the composition is skewed to polar residues. The interval 1–55 (MTQPNTQTTPNDVPAAAEGQQEQQQQQRRGGGRERRGGGRRGDRRGQERDSEWQE) is disordered. The span at 18-28 (EGQQEQQQQQR) shows a compositional bias: low complexity. A compositionally biased stretch (basic and acidic residues) spans 31–55 (GGRERRGGGRRGDRRGQERDSEWQE). An S5 DRBM domain is found at 53–116 (WQERVVQIRR…ADGKKHLVKV (64 aa)).

The protein belongs to the universal ribosomal protein uS5 family. As to quaternary structure, part of the 30S ribosomal subunit. Contacts proteins S4 and S8.

Its function is as follows. With S4 and S12 plays an important role in translational accuracy. Located at the back of the 30S subunit body where it stabilizes the conformation of the head with respect to the body. The polypeptide is Small ribosomal subunit protein uS5 (Prochlorococcus marinus (strain MIT 9313)).